The sequence spans 287 residues: Polyamine aminopropyltransferase (287 aa).

Residues 5 to 238 (EIWYETLHAN…GIMTFAWASN (234 aa)) form the PABS domain. An S-methyl-5'-thioadenosine-binding site is contributed by glutamine 33. Spermidine is bound by residues histidine 64 and aspartate 88. S-methyl-5'-thioadenosine-binding positions include glutamate 108 and 140-141 (DG). Residue aspartate 158 is the Proton acceptor of the active site. 158–161 (DCTD) is a spermidine binding site. Proline 165 provides a ligand contact to S-methyl-5'-thioadenosine.

It belongs to the spermidine/spermine synthase family. In terms of assembly, homodimer or homotetramer.

It localises to the cytoplasm. It catalyses the reaction S-adenosyl 3-(methylsulfanyl)propylamine + putrescine = S-methyl-5'-thioadenosine + spermidine + H(+). The protein operates within amine and polyamine biosynthesis; spermidine biosynthesis; spermidine from putrescine: step 1/1. Functionally, catalyzes the irreversible transfer of a propylamine group from the amino donor S-adenosylmethioninamine (decarboxy-AdoMet) to putrescine (1,4-diaminobutane) to yield spermidine. This chain is Polyamine aminopropyltransferase, found in Pectobacterium atrosepticum (strain SCRI 1043 / ATCC BAA-672) (Erwinia carotovora subsp. atroseptica).